We begin with the raw amino-acid sequence, 510 residues long: Serine carboxypeptidase-like 48 (510 aa).

Residues 1–25 (MDSKTTFLTFLLCIFIFSHFSPSTS) form the signal peptide. Cystine bridges form between Cys-141–Cys-383, Cys-309–Cys-326, and Cys-349–Cys-354. Asn-158 and Asn-159 each carry an N-linked (GlcNAc...) asparagine glycan. The active site involves Ser-231. Residues Asp-421 and His-478 contribute to the active site.

Belongs to the peptidase S10 family. Ubiquitous.

The protein resides in the secreted. Probable carboxypeptidase. In Arabidopsis thaliana (Mouse-ear cress), this protein is Serine carboxypeptidase-like 48 (SCPL48).